Here is a 339-residue protein sequence, read N- to C-terminus: 4-hydroxy-2-oxovalerate aldolase 3 (339 aa).

The Pyruvate carboxyltransferase domain maps to 7 to 259 (IRVTDTSLRD…KTGIDFFAIA (253 aa)). 15 to 16 (RD) contacts substrate. Asp-16 lines the Mn(2+) pocket. Catalysis depends on His-19, which acts as the Proton acceptor. Substrate is bound by residues Ser-169 and His-198. Mn(2+) is bound by residues His-198 and His-200. Tyr-289 contacts substrate.

The protein belongs to the 4-hydroxy-2-oxovalerate aldolase family.

It catalyses the reaction (S)-4-hydroxy-2-oxopentanoate = acetaldehyde + pyruvate. In Rhodococcus jostii (strain RHA1), this protein is 4-hydroxy-2-oxovalerate aldolase 3 (hsaF).